The primary structure comprises 211 residues: Thiamine-phosphate synthase (211 aa).

4-amino-2-methyl-5-(diphosphooxymethyl)pyrimidine is bound by residues 37-41 and Asn69; that span reads QLRIK. Residues Asp70 and Asp89 each contribute to the Mg(2+) site. A 4-amino-2-methyl-5-(diphosphooxymethyl)pyrimidine-binding site is contributed by Ser108. 134–136 serves as a coordination point for 2-[(2R,5Z)-2-carboxy-4-methylthiazol-5(2H)-ylidene]ethyl phosphate; the sequence is TQT. Residue Lys137 participates in 4-amino-2-methyl-5-(diphosphooxymethyl)pyrimidine binding. 2-[(2R,5Z)-2-carboxy-4-methylthiazol-5(2H)-ylidene]ethyl phosphate contacts are provided by residues Gly166 and 186–187; that span reads VS.

The protein belongs to the thiamine-phosphate synthase family. Mg(2+) serves as cofactor.

It carries out the reaction 2-[(2R,5Z)-2-carboxy-4-methylthiazol-5(2H)-ylidene]ethyl phosphate + 4-amino-2-methyl-5-(diphosphooxymethyl)pyrimidine + 2 H(+) = thiamine phosphate + CO2 + diphosphate. The enzyme catalyses 2-(2-carboxy-4-methylthiazol-5-yl)ethyl phosphate + 4-amino-2-methyl-5-(diphosphooxymethyl)pyrimidine + 2 H(+) = thiamine phosphate + CO2 + diphosphate. It catalyses the reaction 4-methyl-5-(2-phosphooxyethyl)-thiazole + 4-amino-2-methyl-5-(diphosphooxymethyl)pyrimidine + H(+) = thiamine phosphate + diphosphate. It functions in the pathway cofactor biosynthesis; thiamine diphosphate biosynthesis; thiamine phosphate from 4-amino-2-methyl-5-diphosphomethylpyrimidine and 4-methyl-5-(2-phosphoethyl)-thiazole: step 1/1. Functionally, condenses 4-methyl-5-(beta-hydroxyethyl)thiazole monophosphate (THZ-P) and 2-methyl-4-amino-5-hydroxymethyl pyrimidine pyrophosphate (HMP-PP) to form thiamine monophosphate (TMP). The polypeptide is Thiamine-phosphate synthase (Salmonella newport (strain SL254)).